Consider the following 702-residue polypeptide: Ribosomal RNA large subunit methyltransferase K/L (702 aa).

The region spanning 43–154 is the THUMP domain; it reads LVYQSLMWSR…KETASIALDL (112 aa).

It belongs to the methyltransferase superfamily. RlmKL family.

The protein resides in the cytoplasm. The catalysed reaction is guanosine(2445) in 23S rRNA + S-adenosyl-L-methionine = N(2)-methylguanosine(2445) in 23S rRNA + S-adenosyl-L-homocysteine + H(+). The enzyme catalyses guanosine(2069) in 23S rRNA + S-adenosyl-L-methionine = N(2)-methylguanosine(2069) in 23S rRNA + S-adenosyl-L-homocysteine + H(+). In terms of biological role, specifically methylates the guanine in position 2445 (m2G2445) and the guanine in position 2069 (m7G2069) of 23S rRNA. The polypeptide is Ribosomal RNA large subunit methyltransferase K/L (Shigella flexneri serotype 5b (strain 8401)).